We begin with the raw amino-acid sequence, 574 residues long: Pentatricopeptide repeat-containing protein At5g25630 (574 aa).

Residues 1-21 show a composition bias toward basic and acidic residues; the sequence is MEDVNQEKKKVPPMSEPERST. Positions 1 to 25 are disordered; it reads MEDVNQEKKKVPPMSEPERSTPIKT. PPR repeat units lie at residues 44-78, 79-113, 114-148, 149-183, 187-221, 222-258, 259-293, 294-328, 329-363, 364-394, 398-432, and 433-467; these read TVRS…GHRP, SLIS…GTKL, DSIF…GLNP, TTST…GNVD, NIRT…GVRP, DTVT…KAKP, NGRT…RVEA, NLVV…NVKA, DVIT…GVKP, DAHA…LIVE, NVVI…GVSP, and NIKT…GVKP.

This sequence belongs to the PPR family. P subfamily.

The protein is Pentatricopeptide repeat-containing protein At5g25630 of Arabidopsis thaliana (Mouse-ear cress).